Here is a 220-residue protein sequence, read N- to C-terminus: dITP/XTP pyrophosphatase (220 aa).

13 to 18 is a binding site for substrate; it reads SHNAGK. The Mg(2+) site is built by aspartate 45 and aspartate 74. Aspartate 74 (proton acceptor) is an active-site residue. Substrate contacts are provided by residues serine 75, 163-166, lysine 186, and 199-200; these read FGYD and HR.

The protein belongs to the HAM1 NTPase family. As to quaternary structure, homodimer. It depends on Mg(2+) as a cofactor.

The catalysed reaction is XTP + H2O = XMP + diphosphate + H(+). It catalyses the reaction dITP + H2O = dIMP + diphosphate + H(+). It carries out the reaction ITP + H2O = IMP + diphosphate + H(+). In terms of biological role, pyrophosphatase that catalyzes the hydrolysis of nucleoside triphosphates to their monophosphate derivatives, with a high preference for the non-canonical purine nucleotides XTP (xanthosine triphosphate), dITP (deoxyinosine triphosphate) and ITP. Seems to function as a house-cleaning enzyme that removes non-canonical purine nucleotides from the nucleotide pool, thus preventing their incorporation into DNA/RNA and avoiding chromosomal lesions. This is dITP/XTP pyrophosphatase from Mesorhizobium japonicum (strain LMG 29417 / CECT 9101 / MAFF 303099) (Mesorhizobium loti (strain MAFF 303099)).